The primary structure comprises 313 residues: Methionyl-tRNA formyltransferase (313 aa).

(6S)-5,6,7,8-tetrahydrofolate is bound at residue 112-115 (SLLP).

The protein belongs to the Fmt family.

It carries out the reaction L-methionyl-tRNA(fMet) + (6R)-10-formyltetrahydrofolate = N-formyl-L-methionyl-tRNA(fMet) + (6S)-5,6,7,8-tetrahydrofolate + H(+). Its function is as follows. Attaches a formyl group to the free amino group of methionyl-tRNA(fMet). The formyl group appears to play a dual role in the initiator identity of N-formylmethionyl-tRNA by promoting its recognition by IF2 and preventing the misappropriation of this tRNA by the elongation apparatus. The polypeptide is Methionyl-tRNA formyltransferase (Roseiflexus castenholzii (strain DSM 13941 / HLO8)).